Here is a 91-residue protein sequence, read N- to C-terminus: MARSIKKGPFVDGHLAKKVEAAVASRDRKPIKTWSRRSTILPDFIGLTIAVHNGRQHVPVLISENMVGHKLGEFALTRTFKGHAADKKAKR.

It belongs to the universal ribosomal protein uS19 family.

In terms of biological role, protein S19 forms a complex with S13 that binds strongly to the 16S ribosomal RNA. The protein is Small ribosomal subunit protein uS19 of Methylobacillus flagellatus (strain ATCC 51484 / DSM 6875 / VKM B-1610 / KT).